A 250-amino-acid chain; its full sequence is 2,3-bisphosphoglycerate-dependent phosphoglycerate mutase (250 aa).

Substrate contacts are provided by residues 10-17 (RHGESQWN), 23-24 (TG), R62, 89-92 (ERHY), K100, 116-117 (RR), and 185-186 (GN). H11 functions as the Tele-phosphohistidine intermediate in the catalytic mechanism. Residue E89 is the Proton donor/acceptor of the active site.

This sequence belongs to the phosphoglycerate mutase family. BPG-dependent PGAM subfamily. As to quaternary structure, homodimer.

It carries out the reaction (2R)-2-phosphoglycerate = (2R)-3-phosphoglycerate. Its pathway is carbohydrate degradation; glycolysis; pyruvate from D-glyceraldehyde 3-phosphate: step 3/5. Catalyzes the interconversion of 2-phosphoglycerate and 3-phosphoglycerate. The chain is 2,3-bisphosphoglycerate-dependent phosphoglycerate mutase from Salmonella dublin (strain CT_02021853).